Here is a 460-residue protein sequence, read N- to C-terminus: Putative arginine/ornithine antiporter (460 aa).

Over 1–4 (MEKK) the chain is Cytoplasmic. A helical transmembrane segment spans residues 5–25 (LGLSALTALVLSSMLGAGVFS). The Periplasmic segment spans residues 26–38 (LPQNMAAVASPAA). A helical transmembrane segment spans residues 39–59 (LLIGWGITGAGILLLAFAMLI). The Cytoplasmic portion of the chain corresponds to 60 to 92 (LTRIRPELDGGIFTYAREGFGELIGFCSAWGYW). The chain crosses the membrane as a helical span at residues 93–113 (LCAVIANVSYLVIVFSALSFF). Over 114-125 (TDTPELRLFGDG) the chain is Periplasmic. The helical transmembrane segment at 126-146 (NTWQSIVGASALLWIVHFLIL) threads the bilayer. Residues 147 to 157 (RGVQTAASINL) lie on the Cytoplasmic side of the membrane. The helical transmembrane segment at 158 to 178 (VATLAKLLPLGLFVVLAMMMF) threads the bilayer. Topologically, residues 179 to 201 (KLDTFKLDFTGLALGVPVWEQVK) are periplasmic. The helical transmembrane segment at 202–222 (NTMLITLWVFIGVEGAVVVSA) threads the bilayer. Over 223–235 (RARNKRDVGKATL) the chain is Cytoplasmic. A helical membrane pass occupies residues 236–256 (LAVLSALGVYLLVTLLSLGVV). At 257–282 (ARPELAEIRNPSMAGLMVEMMGPWGE) the chain is on the periplasmic side. A helical transmembrane segment spans residues 283–303 (IIIAAGLIVSVCGAYLSWTIM). Residues 304-331 (AAEVPFLAATHKAFPRIFARQNAQAAPS) are Cytoplasmic-facing. The chain crosses the membrane as a helical span at residues 332–352 (ASLWLTNICVQICLVLIWLTG). The Periplasmic portion of the chain corresponds to 353 to 357 (SDYNT). Residues 358-378 (LLTIASEMILVPYFLVGAFLL) form a helical membrane-spanning segment. At 379–384 (KIATRP) the chain is on the cytoplasmic side. Transmembrane regions (helical) follow at residues 385 to 405 (LHKA…YASG) and 406 to 426 (PMHL…FLYA). Over 427–439 (RKTHTHDNVLNRQ) the chain is Cytoplasmic. The helical transmembrane segment at 440-460 (EMVLIGMLLIASVPATWMLVG) threads the bilayer.

The protein belongs to the amino acid-polyamine-organocation (APC) superfamily. Basic amino acid/polyamine antiporter (APA) (TC 2.A.3.2) family.

The protein localises to the cell inner membrane. The catalysed reaction is L-ornithine(in) + L-arginine(out) = L-ornithine(out) + L-arginine(in). Its function is as follows. Catalyzes electroneutral exchange between arginine and ornithine to allow high-efficiency energy conversion in the arginine deiminase pathway. This is Putative arginine/ornithine antiporter (ydgI) from Escherichia coli O6:H1 (strain CFT073 / ATCC 700928 / UPEC).